Here is a 110-residue protein sequence, read N- to C-terminus: UPF0339 protein SO_3888 (110 aa).

Tandem repeats lie at residues 10-58 (SSND…RYAK) and 61-109 (AKND…IKDL).

The protein belongs to the UPF0339 family. Duplicated subfamily.

The chain is UPF0339 protein SO_3888 from Shewanella oneidensis (strain ATCC 700550 / JCM 31522 / CIP 106686 / LMG 19005 / NCIMB 14063 / MR-1).